We begin with the raw amino-acid sequence, 187 residues long: Tetratricopeptide repeat protein 36 (187 aa).

TPR repeat units follow at residues 47-80 (VKDL…LPQR), 82-114 (SAYN…SNGK), and 119-152 (CQAL…GSEF).

This sequence belongs to the TTC36 family.

This is Tetratricopeptide repeat protein 36 (ttc36) from Danio rerio (Zebrafish).